The following is a 693-amino-acid chain: Glycine--tRNA ligase beta subunit (693 aa).

This sequence belongs to the class-II aminoacyl-tRNA synthetase family. In terms of assembly, tetramer of two alpha and two beta subunits.

Its subcellular location is the cytoplasm. The enzyme catalyses tRNA(Gly) + glycine + ATP = glycyl-tRNA(Gly) + AMP + diphosphate. The protein is Glycine--tRNA ligase beta subunit (glyS) of Halalkalibacterium halodurans (strain ATCC BAA-125 / DSM 18197 / FERM 7344 / JCM 9153 / C-125) (Bacillus halodurans).